Consider the following 1068-residue polypeptide: MLSLLIIRATQFAITSFRCESTIYRYCAKYYYIGFHNHKDLIGVKEFCGKHYILKIIHYHMKAYYMYPDIRGDLISFTSDDDVWLLSLKDMKPLRITSGLGVSTRPKISPSGRKVAFSVIWLKSGKQGGDIYVVEDGQARRVTYFGSRNSRVAGWISEDEIIVITDFHTPFIQWTEAYKVNVNNGKTEKLPFGMLSNIVIKDDIIVIARGYQDLPNWKGYKGGTKGELWISSDGGKTFEKFVSLDGNVSWPMIVRERVYFLSDHEGVGNLYSVDLKGKDLRRHTNFTDYYCRNASSDGKRIVFQNAGDIYLYDPEKDSLTKLDINLPTDRKKKQPKFVNVMEYMNEAVVNGNYIALVSRGKVFLMRPWDGPSVQLGKKQGVKYRQIQVLPNGDVIGVNDEDKLVILGKDGSEKVINKDFSRIERVKVSPDGKKVLLSNNKLELWVYEIDNDNARLIDKSEYDLILEFDWHPNAEWFAYAFPEGYYTQSIKLAHIDGKVVRITTPYGYDFSPSFDPDGRYLYFLAARHLDPTNDKVIFNLSFQRVVKPYLVVLGNYYSPFNQPLDEANSNDKNVIIEGIEDRVVPFPIEEENYVQIAGAKNNKIFLFSYPIRGLRSQTGDVFGRLEVYDLENKAKELYADNVSSFSLSSDKSKILLILKDSLRLFDVNVKPDFNSTGRKGGVIDLSRVKVYVEPEKEWRQMLRETWKLMKQNYWNEERLKNWDSILPKYERLLDRISTRFELSDVIQEMQGETRTSHSYETAYDYDTPEPLSVGGLGAEFEYDESNKCYKITKIYVGDSTNENERSPLRDPGVQLNVGDCIKNIDGEDANGNIYSHLINKDQVILDVITADGKNKRVTVKVLKDERFLIYRYWVEKNREYVHEKSKGRLGYIHIPDMMYQGFAEFYRLFMSEFHREGLVVDVRFNRGGFVSGLLLEKLLLKRVGYDYPRNGKPIPMPYFSSPKVLVGITNEHAGSDGDIFSFLFKKYKLGVLIGRRTWGGVVGIRPRYRLVDKTYISQPEFAVNFEDVGFGIENYGVDPDIVVEIKPDDYVNNRDTQLDTAIELALKQL.

The segment at 61–326 (MKAYYMYPDI…DSLTKLDINL (266 aa)) is six-bladed beta propeller. Positions 338 to 686 (VNVMEYMNEA…RKGGVIDLSR (349 aa)) are seven-bladed beta propeller. Residues 692 to 762 (EPEKEWRQML…RTSHSYETAY (71 aa)) are C-1. The active-site Charge relay system is the histidine 756. The PDZ-like stretch occupies residues 771–864 (SVGGLGAEFE…RVTVKVLKDE (94 aa)). Positions 865–1068 (RFLIYRYWVE…TAIELALKQL (204 aa)) are C-2. Glycine 927 provides a ligand contact to substrate. Serine 974 (nucleophile) is an active-site residue. Residue glutamate 1032 is the Charge relay system of the active site.

Belongs to the peptidase S41B family.

It localises to the cytoplasm. In terms of biological role, degrades oligopeptides in a sequential manner. This Saccharolobus solfataricus (strain ATCC 35092 / DSM 1617 / JCM 11322 / P2) (Sulfolobus solfataricus) protein is Tricorn protease homolog (tri).